A 98-amino-acid chain; its full sequence is MEARDIILRPVVTEASMAGMDNKRYTFDVDLRATKTQVKNAVEEIFGVKVVKVNIMNVKGKLKRQGRYEGYTKRRRKAIVTLSADSNEIKLFNDNNEN.

Belongs to the universal ribosomal protein uL23 family. Part of the 50S ribosomal subunit. Contacts protein L29, and trigger factor when it is bound to the ribosome.

In terms of biological role, one of the early assembly proteins it binds 23S rRNA. One of the proteins that surrounds the polypeptide exit tunnel on the outside of the ribosome. Forms the main docking site for trigger factor binding to the ribosome. The sequence is that of Large ribosomal subunit protein uL23 from Limosilactobacillus reuteri (strain DSM 20016) (Lactobacillus reuteri).